Reading from the N-terminus, the 266-residue chain is Thymidylate synthase (266 aa).

Arginine 24 contacts dUMP. Histidine 54 is a (6R)-5,10-methylene-5,6,7,8-tetrahydrofolate binding site. Residue 129–130 (RR) coordinates dUMP. Cysteine 149 acts as the Nucleophile in catalysis. Residues 169–172 (RSAD), asparagine 180, and 210–212 (HIY) contribute to the dUMP site. Aspartate 172 serves as a coordination point for (6R)-5,10-methylene-5,6,7,8-tetrahydrofolate. Alanine 265 is a binding site for (6R)-5,10-methylene-5,6,7,8-tetrahydrofolate.

This sequence belongs to the thymidylate synthase family. Bacterial-type ThyA subfamily. Homodimer.

The protein localises to the cytoplasm. The catalysed reaction is dUMP + (6R)-5,10-methylene-5,6,7,8-tetrahydrofolate = 7,8-dihydrofolate + dTMP. Its pathway is pyrimidine metabolism; dTTP biosynthesis. Its function is as follows. Catalyzes the reductive methylation of 2'-deoxyuridine-5'-monophosphate (dUMP) to 2'-deoxythymidine-5'-monophosphate (dTMP) while utilizing 5,10-methylenetetrahydrofolate (mTHF) as the methyl donor and reductant in the reaction, yielding dihydrofolate (DHF) as a by-product. This enzymatic reaction provides an intracellular de novo source of dTMP, an essential precursor for DNA biosynthesis. In Mycobacterium sp. (strain KMS), this protein is Thymidylate synthase.